We begin with the raw amino-acid sequence, 200 residues long: Snake venom metalloproteinase rhomb-I (200 aa).

The Peptidase M12B domain maps to 4–200; that stretch reads KYIELVVVAD…RKPQCILNKP (197 aa). Residues Glu7 and Asp91 each coordinate Ca(2+). Cystine bridges form between Cys115/Cys195, Cys155/Cys179, and Cys157/Cys162. Position 140 (His140) interacts with Zn(2+). Glu141 is an active-site residue. His144 and His150 together coordinate Zn(2+). Positions 195 and 198 each coordinate Ca(2+).

Monomer. Requires Zn(2+) as cofactor. As to expression, expressed by the venom gland.

It localises to the secreted. Snake venom zinc metalloproteinase that induces hemorrhage. This is Snake venom metalloproteinase rhomb-I from Lachesis muta rhombeata (Bushmaster).